The following is a 151-amino-acid chain: Transcription antitermination protein NusB (151 aa).

Belongs to the NusB family.

Involved in transcription antitermination. Required for transcription of ribosomal RNA (rRNA) genes. Binds specifically to the boxA antiterminator sequence of the ribosomal RNA (rrn) operons. The sequence is that of Transcription antitermination protein NusB from Hamiltonella defensa subsp. Acyrthosiphon pisum (strain 5AT).